A 158-amino-acid polypeptide reads, in one-letter code: MEPLISAPYLTTTKMSAPATLDAACIFCKIIKSEIPSFKLIETKYSYAFLDIQPTAEGHALIIPKYHGAKLHDIPDEFLTDAMPIAKRLAKAMKLDTYNVLQNNGKIAHQEVDHVHFHLIPKRDEKSGLIVGWPAQETDFDKLGKLHKELLAKLEGSD.

One can recognise an HIT domain in the interval 26–129 (IFCKIIKSEI…IPKRDEKSGL (104 aa)). Residues 51-52 (DI), Asn103, 109-111 (HQE), and 116-118 (HFH) each bind AMP. The Histidine triad motif signature appears at 114 to 118 (HVHFH). His116 functions as the Tele-AMP-histidine intermediate in the catalytic mechanism.

This sequence belongs to the HINT family. As to quaternary structure, homodimer. Interacts with KIN28. It depends on Mg(2+) as a cofactor.

It catalyses the reaction adenosine 5'-phosphoramidate + H2O = AMP + NH4(+). Hydrolyzes adenosine 5'-monophosphoramidate substrates such as AMP-morpholidate, AMP-N-alanine methyl ester, AMP-alpha-acetyl lysine methyl ester and AMP-NH2. Plays a role in the regulation of kinase KIN28 function. Essential for growth on galactose media at elevated temperatures. This Saccharomyces cerevisiae (strain ATCC 204508 / S288c) (Baker's yeast) protein is Adenosine 5'-monophosphoramidase HNT1.